A 766-amino-acid chain; its full sequence is Nucleolar complex protein 2 (766 aa).

Residues 1–12 are compositionally biased toward basic residues; that stretch reads MKLATKKIKTLG. 3 disordered regions span residues 1–73, 100–154, and 674–766; these read MKLA…EELE, DTDD…DEED, and KTGV…LNEW. Positions 14–29 are enriched in basic and acidic residues; that stretch reads SKPDLSKKKPAKDAIR. Residues 33–42 show a composition bias toward polar residues; that stretch reads PQTTSETKVT. A compositionally biased stretch (basic residues) spans 58–67; the sequence is KTTKKGFKKS. Residues 100-115 are compositionally biased toward acidic residues; it reads DTDDDDDEEGDEEDKE. T101 carries the post-translational modification Phosphothreonine. Positions 130-140 are enriched in basic and acidic residues; that stretch reads EKYHKPSKDLE. The span at 141-154 shows a compositional bias: acidic residues; it reads VASDESDFEVDEED. 5 positions are modified to phosphoserine: S143, S146, S691, S693, and S705. Residues 706 to 720 are compositionally biased toward acidic residues; it reads DDDDDEDVQEEEEVE. The span at 757-766 shows a compositional bias: basic and acidic residues; it reads IVKDLDLNEW.

This sequence belongs to the NOC2 family.

The protein resides in the nucleus. This is Nucleolar complex protein 2 from Drosophila melanogaster (Fruit fly).